A 984-amino-acid chain; its full sequence is Putative formate dehydrogenase SAV2309 (984 aa).

In terms of domain architecture, 2Fe-2S ferredoxin-type spans Glu-3 to Asp-79. [2Fe-2S] cluster is bound by residues Cys-37, Cys-48, Cys-51, and Cys-63. The 4Fe-4S His(Cys)3-ligated-type domain maps to Asp-79–Gly-119. Positions 95, 99, 102, 109, 147, 150, 153, 157, 190, 193, 196, 200, 264, 267, 271, and 299 each coordinate [4Fe-4S] cluster. 2 4Fe-4S ferredoxin-type domains span residues Pro-138–Thr-165 and Asn-181–Glu-211. The interval Met-252–Lys-984 is formate dehydrogenase. In terms of domain architecture, 4Fe-4S Mo/W bis-MGD-type spans Ile-257 to Gln-313.

It in the C-terminal section; belongs to the prokaryotic molybdopterin-containing oxidoreductase family. [2Fe-2S] cluster is required as a cofactor. It depends on [4Fe-4S] cluster as a cofactor. Mo-bis(molybdopterin guanine dinucleotide) serves as cofactor.

It catalyses the reaction formate + NAD(+) = CO2 + NADH. This chain is Putative formate dehydrogenase SAV2309, found in Staphylococcus aureus (strain Mu50 / ATCC 700699).